The primary structure comprises 114 residues: T cell receptor beta variable 10-3 (114 aa).

Positions 1–21 (MGTRLFFYVALCLLWTGHMDA) are cleaved as a signal peptide. One can recognise an Ig-like domain in the interval 22–114 (GITQSPRHKV…TSVYFCAISE (93 aa)). Cysteines 42 and 110 form a disulfide.

As to quaternary structure, alpha-beta TR is a heterodimer composed of an alpha and beta chain; disulfide-linked. The alpha-beta TR is associated with the transmembrane signaling CD3 coreceptor proteins to form the TR-CD3 (TcR or TCR). The assembly of alpha-beta TR heterodimers with CD3 occurs in the endoplasmic reticulum where a single alpha-beta TR heterodimer associates with one CD3D-CD3E heterodimer, one CD3G-CD3E heterodimer and one CD247 homodimer forming a stable octameric structure. CD3D-CD3E and CD3G-CD3E heterodimers preferentially associate with TR alpha and TR beta chains, respectively. The association of the CD247 homodimer is the last step of TcR assembly in the endoplasmic reticulum and is required for transport to the cell surface.

It localises to the cell membrane. In terms of biological role, v region of the variable domain of T cell receptor (TR) beta chain that participates in the antigen recognition. Alpha-beta T cell receptors are antigen specific receptors which are essential to the immune response and are present on the cell surface of T lymphocytes. Recognize peptide-major histocompatibility (MH) (pMH) complexes that are displayed by antigen presenting cells (APC), a prerequisite for efficient T cell adaptive immunity against pathogens. Binding of alpha-beta TR to pMH complex initiates TR-CD3 clustering on the cell surface and intracellular activation of LCK that phosphorylates the ITAM motifs of CD3G, CD3D, CD3E and CD247 enabling the recruitment of ZAP70. In turn ZAP70 phosphorylates LAT, which recruits numerous signaling molecules to form the LAT signalosome. The LAT signalosome propagates signal branching to three major signaling pathways, the calcium, the mitogen-activated protein kinase (MAPK) kinase and the nuclear factor NF-kappa-B (NF-kB) pathways, leading to the mobilization of transcription factors that are critical for gene expression and essential for T cell growth and differentiation. The T cell repertoire is generated in the thymus, by V-(D)-J rearrangement. This repertoire is then shaped by intrathymic selection events to generate a peripheral T cell pool of self-MH restricted, non-autoaggressive T cells. Post-thymic interaction of alpha-beta TR with the pMH complexes shapes TR structural and functional avidity. This is T cell receptor beta variable 10-3 from Homo sapiens (Human).